The following is a 320-amino-acid chain: MGELFKWPSFSPFVPFHVSAGQTVIRKFGGLLTCEFLPPPPGRSFMMRQTYRHSVEGPIPENLRKLIESDHRPDGPPMHFHQWQTEYFKVEEGICVVEVNGKQTMLTPDDEEISCKAGNIHRFFIHPDSRERMTVILSASDSGVDYQLDRVFFENWYGYWHDALLYQGGLDFIQTLCIHDAGDHYTPGPAWLPFRRFIGYWMCVVIGRWIGGLLGYKPFFREYTTDWDFAVTKMKANPWTRRLVNDSYANKKSWDEQVELSSRPKAQNADYELLVTDITEENRRKKANGATNGHAKLANGTATGVAVEVKENGEELRKRS.

N-linked (GlcNAc...) asparagine glycosylation is found at N245 and N299.

The protein operates within secondary metabolite biosynthesis. In terms of biological role, epoxidase; part of the gene cluster that mediates the biosynthesis of terreic acid, a quinone epoxide inhibitor of Bruton's tyrosine kinase. The first step of the pathway is the synthesis of 6-methylsalicylic acid (6-MSA) by the 6-methylsalicylic acid synthase atX. In the biosynthesis of 6-MSA, atX utilizes one acetyl-CoA and three malonyl-CoAs as its substrates and catalyzes a series of programmed reactions including Claisen condensation, reduction, aldol cyclization, and the hydrolytic cleavage that yields 6-MSA. The 6-methylsalicylate 1-monooxygenase atA then catalyzes the decarboxylative hydroxylation of 6-MSA to 3-methylcatechol. The next step is the conversion of 3-methylcatechol to 3-methyl-1,2,4-benzenetriol by cytochrome P450 monooxygenase atE, which is enhanced by cytochrome P450 monooxygenase atG. Then, the epoxidase atD catalyzes the epoxidation and hydroxyl oxidation of 3-methyl-1,2,4-benzenetriol to terremutin. Lastly, GMC oxidoreductase atC oxidizes terremutin to terreic acid. The polypeptide is Epoxidase atD (Aspergillus terreus (strain NIH 2624 / FGSC A1156)).